The chain runs to 363 residues: UDP-N-acetylenolpyruvoylglucosamine reductase (363 aa).

Residues 25-201 (IGPVARRMLT…RSAPVRYREL (177 aa)) form the FAD-binding PCMH-type domain. R168 is an active-site residue. S249 functions as the Proton donor in the catalytic mechanism. Residue E352 is part of the active site.

It belongs to the MurB family. It depends on FAD as a cofactor.

Its subcellular location is the cytoplasm. The enzyme catalyses UDP-N-acetyl-alpha-D-muramate + NADP(+) = UDP-N-acetyl-3-O-(1-carboxyvinyl)-alpha-D-glucosamine + NADPH + H(+). It participates in cell wall biogenesis; peptidoglycan biosynthesis. Cell wall formation. In Mycolicibacterium smegmatis (strain ATCC 700084 / mc(2)155) (Mycobacterium smegmatis), this protein is UDP-N-acetylenolpyruvoylglucosamine reductase.